A 238-amino-acid polypeptide reads, in one-letter code: Large ribosomal subunit protein uL5c (238 aa).

It belongs to the universal ribosomal protein uL5 family. In terms of assembly, part of the 50S ribosomal subunit; contacts the 5S rRNA.

Its subcellular location is the plastid. The protein resides in the chloroplast. Its function is as follows. Binds 5S rRNA, forms part of the central protuberance of the 50S subunit. The sequence is that of Large ribosomal subunit protein uL5c (rpl5) from Phaeodactylum tricornutum (strain CCAP 1055/1).